The sequence spans 396 residues: NADH-quinone oxidoreductase subunit D (396 aa).

Belongs to the complex I 49 kDa subunit family. NDH-1 is composed of 14 different subunits. Subunits NuoB, C, D, E, F, and G constitute the peripheral sector of the complex.

It is found in the cell inner membrane. It carries out the reaction a quinone + NADH + 5 H(+)(in) = a quinol + NAD(+) + 4 H(+)(out). Functionally, NDH-1 shuttles electrons from NADH, via FMN and iron-sulfur (Fe-S) centers, to quinones in the respiratory chain. The immediate electron acceptor for the enzyme in this species is believed to be ubiquinone. Couples the redox reaction to proton translocation (for every two electrons transferred, four hydrogen ions are translocated across the cytoplasmic membrane), and thus conserves the redox energy in a proton gradient. This chain is NADH-quinone oxidoreductase subunit D, found in Brucella anthropi (strain ATCC 49188 / DSM 6882 / CCUG 24695 / JCM 21032 / LMG 3331 / NBRC 15819 / NCTC 12168 / Alc 37) (Ochrobactrum anthropi).